We begin with the raw amino-acid sequence, 293 residues long: uncharacterized protein (293 aa).

The active site involves Glu47.

This sequence belongs to the PhzF family.

This is an uncharacterized protein from Bacillus subtilis (strain 168).